Reading from the N-terminus, the 179-residue chain is Large ribosomal subunit protein uL6 (179 aa).

It belongs to the universal ribosomal protein uL6 family. In terms of assembly, part of the 50S ribosomal subunit.

In terms of biological role, this protein binds to the 23S rRNA, and is important in its secondary structure. It is located near the subunit interface in the base of the L7/L12 stalk, and near the tRNA binding site of the peptidyltransferase center. The protein is Large ribosomal subunit protein uL6 of Chlorobium phaeovibrioides (strain DSM 265 / 1930) (Prosthecochloris vibrioformis (strain DSM 265)).